A 480-amino-acid polypeptide reads, in one-letter code: Pyruvate kinase (480 aa).

Arg-36 is a binding site for substrate. K(+) is bound by residues Asn-38, Ser-40, and Asp-70. Asn-38 to His-41 serves as a coordination point for ATP. Arg-77 and Lys-160 together coordinate ATP. Glu-225 serves as a coordination point for Mg(2+). Substrate contacts are provided by Gly-251, Asp-252, and Thr-284. Position 252 (Asp-252) interacts with Mg(2+).

This sequence belongs to the pyruvate kinase family. In terms of assembly, homotetramer. It depends on Mg(2+) as a cofactor. K(+) is required as a cofactor.

It catalyses the reaction pyruvate + ATP = phosphoenolpyruvate + ADP + H(+). It participates in carbohydrate degradation; glycolysis; pyruvate from D-glyceraldehyde 3-phosphate: step 5/5. Allosterically activated by AMP and by several sugar phosphates. Belongs to type II PK. The polypeptide is Pyruvate kinase (pykA) (Buchnera aphidicola subsp. Acyrthosiphon pisum (strain APS) (Acyrthosiphon pisum symbiotic bacterium)).